The primary structure comprises 454 residues: Bifunctional protein GlmU (454 aa).

A pyrophosphorylase region spans residues 1-231; the sequence is MSRPTVSLIV…EAETLGVNTR (231 aa). UDP-N-acetyl-alpha-D-glucosamine contacts are provided by residues 11–14, lysine 25, glutamine 78, 83–84, 106–108, glycine 143, glutamate 157, asparagine 172, and asparagine 229; these read LAAG, GT, and YGD. Position 108 (aspartate 108) interacts with Mg(2+). Position 229 (asparagine 229) interacts with Mg(2+). A linker region spans residues 232-252; it reads AQLAAAEAEFQRRARAAALED. Residues 253-454 are N-acetyltransferase; sequence GVTLTAPDTV…ARDASKKGTN (202 aa). Arginine 318 and lysine 336 together coordinate UDP-N-acetyl-alpha-D-glucosamine. The active-site Proton acceptor is histidine 348. UDP-N-acetyl-alpha-D-glucosamine contacts are provided by tyrosine 351 and asparagine 362. Acetyl-CoA-binding positions include alanine 365, 371–372, serine 390, serine 408, and arginine 425; that span reads NY.

In the N-terminal section; belongs to the N-acetylglucosamine-1-phosphate uridyltransferase family. It in the C-terminal section; belongs to the transferase hexapeptide repeat family. In terms of assembly, homotrimer. It depends on Mg(2+) as a cofactor.

It localises to the cytoplasm. The enzyme catalyses alpha-D-glucosamine 1-phosphate + acetyl-CoA = N-acetyl-alpha-D-glucosamine 1-phosphate + CoA + H(+). The catalysed reaction is N-acetyl-alpha-D-glucosamine 1-phosphate + UTP + H(+) = UDP-N-acetyl-alpha-D-glucosamine + diphosphate. The protein operates within nucleotide-sugar biosynthesis; UDP-N-acetyl-alpha-D-glucosamine biosynthesis; N-acetyl-alpha-D-glucosamine 1-phosphate from alpha-D-glucosamine 6-phosphate (route II): step 2/2. It participates in nucleotide-sugar biosynthesis; UDP-N-acetyl-alpha-D-glucosamine biosynthesis; UDP-N-acetyl-alpha-D-glucosamine from N-acetyl-alpha-D-glucosamine 1-phosphate: step 1/1. It functions in the pathway bacterial outer membrane biogenesis; LPS lipid A biosynthesis. Its function is as follows. Catalyzes the last two sequential reactions in the de novo biosynthetic pathway for UDP-N-acetylglucosamine (UDP-GlcNAc). The C-terminal domain catalyzes the transfer of acetyl group from acetyl coenzyme A to glucosamine-1-phosphate (GlcN-1-P) to produce N-acetylglucosamine-1-phosphate (GlcNAc-1-P), which is converted into UDP-GlcNAc by the transfer of uridine 5-monophosphate (from uridine 5-triphosphate), a reaction catalyzed by the N-terminal domain. The polypeptide is Bifunctional protein GlmU (Cereibacter sphaeroides (strain ATCC 17025 / ATH 2.4.3) (Rhodobacter sphaeroides)).